The following is a 170-amino-acid chain: Peptide deformylase (170 aa).

Fe cation-binding residues include Cys-94 and His-136. Residue Glu-137 is part of the active site. Residue His-140 participates in Fe cation binding.

This sequence belongs to the polypeptide deformylase family. The cofactor is Fe(2+).

It carries out the reaction N-terminal N-formyl-L-methionyl-[peptide] + H2O = N-terminal L-methionyl-[peptide] + formate. Removes the formyl group from the N-terminal Met of newly synthesized proteins. Requires at least a dipeptide for an efficient rate of reaction. N-terminal L-methionine is a prerequisite for activity but the enzyme has broad specificity at other positions. The chain is Peptide deformylase from Stenotrophomonas maltophilia (strain K279a).